A 208-amino-acid polypeptide reads, in one-letter code: Urease accessory protein UreG 1 (208 aa).

14–21 contributes to the GTP binding site; that stretch reads GPVGSGKT.

Belongs to the SIMIBI class G3E GTPase family. UreG subfamily. Homodimer. UreD, UreF and UreG form a complex that acts as a GTP-hydrolysis-dependent molecular chaperone, activating the urease apoprotein by helping to assemble the nickel containing metallocenter of UreC. The UreE protein probably delivers the nickel.

It is found in the cytoplasm. Facilitates the functional incorporation of the urease nickel metallocenter. This process requires GTP hydrolysis, probably effectuated by UreG. The chain is Urease accessory protein UreG 1 from Brucella ovis (strain ATCC 25840 / 63/290 / NCTC 10512).